The following is a 3712-amino-acid chain: Laminin subunit alpha (3712 aa).

The first 22 residues, 1 to 22, serve as a signal peptide directing secretion; sequence MGHGVASIGALLVILAISYCQA. The 250-residue stretch at 23–272 folds into the Laminin N-terminal domain; it reads ELTPPYFNLA…SIKDISIGGR (250 aa). 2 N-linked (GlcNAc...) asparagine glycosylation sites follow: Asn116 and Asn219. Cystine bridges form between Cys273–Cys282, Cys275–Cys296, Cys298–Cys307, Cys310–Cys330, Cys333–Cys342, Cys335–Cys367, Cys370–Cys379, Cys382–Cys400, Cys403–Cys414, Cys405–Cys421, Cys423–Cys432, Cys435–Cys445, Cys448–Cys460, Cys450–Cys468, Cys470–Cys479, Cys482–Cys492, Cys495–Cys507, Cys497–Cys514, Cys516–Cys525, Cys528–Cys538, Cys541–Cys553, Cys543–Cys560, Cys562–Cys571, Cys574–Cys584, Cys587–Cys599, Cys589–Cys605, Cys607–Cys616, Cys619–Cys629, Cys632–Cys644, Cys634–Cys650, Cys652–Cys661, Cys664–Cys674, Cys677–Cys691, Cys679–Cys700, Cys702–Cys711, Cys714–Cys729, Cys732–Cys746, Cys734–Cys753, Cys755–Cys764, Cys767–Cys782, Cys785–Cys797, Cys787–Cys804, and Cys806–Cys815. Laminin EGF-like domains lie at 273 to 332, 333 to 402, 403 to 447, 448 to 494, 495 to 540, 541 to 586, 587 to 631, 632 to 676, 677 to 731, and 732 to 784; these read CMCN…NCEP, CNCH…VCSP, CQCD…NCRE, CECN…ECKA, CECN…TCSY, CDCD…DCKP, CNCS…DCLP, CHCD…SCED, CNCD…GCEI, and CDCW…GCKD. Asn395 carries N-linked (GlcNAc...) asparagine glycosylation. Residue Asn453 is glycosylated (N-linked (GlcNAc...) asparagine). A glycan (N-linked (GlcNAc...) asparagine) is linked at Asn508. Asn588 carries N-linked (GlcNAc...) asparagine glycosylation. Residue Asn722 is glycosylated (N-linked (GlcNAc...) asparagine). One can recognise a Laminin EGF-like 11; truncated domain in the interval 785–815; it reads CSCDVGGSWQSVCDKISGQCKCHPRITGLAC. The domain IV'' stretch occupies residues 816 to 1374; sequence TQPLTTHFFP…TADYNSGALP (559 aa). Asn897 and Asn1352 each carry an N-linked (GlcNAc...) asparagine glycan. 16 disulfides stabilise this stretch: Cys1375-Cys1387, Cys1377-Cys1394, Cys1396-Cys1405, Cys1408-Cys1418, Cys1421-Cys1429, Cys1423-Cys1436, Cys1438-Cys1447, Cys1450-Cys1463, Cys1466-Cys1480, Cys1468-Cys1487, Cys1489-Cys1498, Cys1501-Cys1511, Cys1514-Cys1526, Cys1516-Cys1533, Cys1535-Cys1544, and Cys1547-Cys1562. 4 Laminin EGF-like domains span residues 1375–1420, 1421–1465, 1466–1513, and 1514–1564; these read CNCD…DCKP, CKCP…GCEE, CACN…HCEQ, and CSCH…GCTT. An N-linked (GlcNAc...) asparagine glycan is attached at Asn1484. A Laminin EGF-like 16; first part domain is found at 1565–1574; it reads CFCFGKTSRC. Asn1583 and Asn1617 each carry an N-linked (GlcNAc...) asparagine glycan. A Laminin IV type A domain is found at 1585-1775; it reads SLLKHVSITT…GEYQFLAVER (191 aa). The Laminin EGF-like 16; second part domain maps to 1776–1808; the sequence is CSCPPGYSGHSCEDCAPGYYRDPSGPYGGYCIP. 26 cysteine pairs are disulfide-bonded: Cys1778/Cys1787, Cys1790/Cys1806, Cys1809/Cys1818, Cys1811/Cys1825, Cys1828/Cys1837, Cys1840/Cys1856, Cys1859/Cys1874, Cys1861/Cys1885, Cys1887/Cys1896, Cys1899/Cys1914, Cys1917/Cys1931, Cys1919/Cys1938, Cys1941/Cys1950, Cys1953/Cys1967, Cys1970/Cys1980, Cys1972/Cys1987, Cys1989/Cys1998, Cys2001/Cys2014, Cys2017/Cys2028, Cys2019/Cys2035, Cys2037/Cys2046, Cys2049/Cys2061, Cys2064/Cys2076, Cys2066/Cys2083, Cys2085/Cys2094, and Cys2097/Cys2109. Laminin EGF-like domains lie at 1809 to 1858, 1859 to 1916, 1917 to 1969, 1970 to 2016, 2017 to 2063, and 2064 to 2111; these read CECN…DCMI, CACP…VCKP, CECS…NCQS, CDCD…GCRA, CDCG…GCTP, and CNCN…GCQE. An N-linked (GlcNAc...) asparagine glycan is attached at Asn1847. An N-linked (GlcNAc...) asparagine glycan is attached at Asn1943. The N-linked (GlcNAc...) asparagine glycan is linked to Asn2024. The segment at 2112 to 2671 is domain II and I; sequence CNNCHHALLD…EAARQLANSI (560 aa). Residues 2178 to 2249 are a coiled coil; it reads KKANSELESD…LSKNLEAAAS (72 aa). Asn2196, Asn2215, Asn2267, Asn2301, and Asn2323 each carry an N-linked (GlcNAc...) asparagine glycan. Residues 2301 to 2321 adopt a coiled-coil conformation; that stretch reads NKSLNALKNDIGEFSDHLEDL. A coiled-coil region spans residues 2376–2450; sequence DLTLNQINQK…QYTDMTASAE (75 aa). Residues Asn2482, Asn2524, Asn2538, Asn2569, Asn2699, Asn2720, Asn2890, Asn2938, and Asn3010 are each glycosylated (N-linked (GlcNAc...) asparagine). The stretch at 2541–2676 forms a coiled coil; it reads EHQLKDINKL…LANSIKVGVN (136 aa). Laminin G-like domains are found at residues 2672 to 2868, 2876 to 3048, and 3055 to 3223; these read KVGV…ERDV, VTGL…EEGC, and VVSY…INGC. Cys3022 and Cys3048 are oxidised to a cystine. An N-linked (GlcNAc...) asparagine glycan is attached at Asn3070. Cysteines 3196 and 3223 form a disulfide. Positions 3244–3297 are disordered; it reads NEVESPWSNADTLPPLKPDIESTLPPTTPTTTTTTTTTTTSTTTTSTTTTTTTP. The span at 3265–3297 shows a compositional bias: low complexity; the sequence is STLPPTTPTTTTTTTTTTTSTTTTSTTTTTTTP. Laminin G-like domains lie at 3349–3528 and 3534–3709; these read GYRF…VVPC and RGLF…QGYC. Asn3491 carries an N-linked (GlcNAc...) asparagine glycan. A disulfide bridge links Cys3505 with Cys3528. Residue Asn3612 is glycosylated (N-linked (GlcNAc...) asparagine). Cys3682 and Cys3709 are disulfide-bonded.

As to quaternary structure, laminin is a complex glycoprotein, consisting of three different polypeptide chains (alpha, beta, gamma), which are bound to each other by disulfide bonds into a cross-shaped molecule comprising one long and three short arms with globules at each end. Newly formed mesoderm and later prominently expressed in hemocytes, which also synthesize collagen IV. Expressed in muscles.

The protein localises to the secreted. The protein resides in the extracellular space. It is found in the extracellular matrix. It localises to the basement membrane. Its subcellular location is the synapse. The protein localises to the cell projection. The protein resides in the axon. It is found in the cytoplasmic vesicle. It localises to the secretory vesicle. Its subcellular location is the synaptic vesicle. Functionally, binding to cells via a high affinity receptor, laminin is thought to mediate the attachment, migration and organization of cells into tissues during embryonic development by interacting with other extracellular matrix components. Activates presynaptic signaling involving integrin alpha-PS3/beta-nu and Fak to suppress neuromuscular junction (NMJ) growth during larval development and during low crawling activity, but not during higher-crawling conditions. Mediates, together with integrin alpha-PS3/beta-nu, glutamate receptor-modulated NMJ growth. The sequence is that of Laminin subunit alpha (LanA) from Drosophila melanogaster (Fruit fly).